The primary structure comprises 427 residues: Trigger factor (427 aa).

One can recognise a PPIase FKBP-type domain in the interval 163–248 (GDTVILDFEG…LHEIKTKEVP (86 aa)).

The protein belongs to the FKBP-type PPIase family. Tig subfamily.

Its subcellular location is the cytoplasm. It catalyses the reaction [protein]-peptidylproline (omega=180) = [protein]-peptidylproline (omega=0). In terms of biological role, involved in protein export. Acts as a chaperone by maintaining the newly synthesized protein in an open conformation. Functions as a peptidyl-prolyl cis-trans isomerase. The chain is Trigger factor from Listeria monocytogenes serotype 4b (strain CLIP80459).